The sequence spans 771 residues: Probable cation-transporting ATPase G (771 aa).

In terms of domain architecture, HMA spans Gly19–Ala86. A helical membrane pass occupies residues Ala72–Tyr92. The tract at residues Asp122–Asp143 is disordered. Transmembrane regions (helical) follow at residues Val163 to Gly183, Val209 to Gly229, Val330 to Ala350, Met387 to Ile407, and Leu411 to Val431. The active-site 4-aspartylphosphate intermediate is the Asp462. Mg(2+) is bound by residues Asp651 and Asp655. A run of 2 helical transmembrane segments spans residues Pro657 to Ile677 and Ile716 to Leu736.

It belongs to the cation transport ATPase (P-type) (TC 3.A.3) family. Type IB subfamily.

It is found in the cell membrane. It catalyses the reaction ATP + H2O = ADP + phosphate + H(+). The protein is Probable cation-transporting ATPase G (ctpG) of Mycobacterium bovis (strain ATCC BAA-935 / AF2122/97).